The following is a 117-amino-acid chain: Large ribosomal subunit protein bL20c (117 aa).

This sequence belongs to the bacterial ribosomal protein bL20 family.

Its subcellular location is the plastid. It localises to the chloroplast. Its function is as follows. Binds directly to 23S ribosomal RNA and is necessary for the in vitro assembly process of the 50S ribosomal subunit. It is not involved in the protein synthesizing functions of that subunit. This Bigelowiella natans (Pedinomonas minutissima) protein is Large ribosomal subunit protein bL20c (rpl20).